The primary structure comprises 64 residues: Large ribosomal subunit protein uL29 (64 aa).

This sequence belongs to the universal ribosomal protein uL29 family.

The sequence is that of Large ribosomal subunit protein uL29 from Synechococcus elongatus (strain ATCC 33912 / PCC 7942 / FACHB-805) (Anacystis nidulans R2).